A 362-amino-acid chain; its full sequence is Neisseria adhesin A (362 aa).

The signal sequence occupies residues 1-23; that stretch reads MKHFPSKVLTTAILATFCSGALA. The segment at 24-169 is head domain; it reads ATSDDDVKKA…NIVKIDEKLE (146 aa). 2 coiled-coil regions span residues 90 to 146 and 183 to 288; these read VTNL…LNKL and NDIA…KETR. Residues 170 to 307 form a coiled stalk domain region; that stretch reads AVADTVDKHA…SGLFQPYNVG (138 aa). 4 beta stranded membrane-spanning segments follow: residues 307–317, 321–332, 339–345, and 351–362; these read GRFNVTAAVGG, ESAVAIGTGFRF, KAGVAVG, and SAAYHVGVNYEW. Positions 308–362 are translocator domain; the sequence is RFNVTAAVGGYKSESAVAIGTGFRFTENFAAKAGVAVGTSSGSSAAYHVGVNYEW.

The protein belongs to the autotransporter-2 (AT-2) (TC 1.B.40) family. Forms high molecular weight oligomers in whole cell extracts that are not disrupted by boiling in SDS buffer. Homotrimer. A fragment containing the N-terminal half of the mature protein (residues 24-210, head domain plus part of the stalk) binds human integrin beta-1 (ITGB1). It was not seen to bind immobilized purified CEACAMs 1, 3, 5, 6 or 8 nor commercially prepared type I collagen, fibronectin or matrigel.

The protein localises to the cell surface. It localises to the cell outer membrane. Its function is as follows. Adheres to and induces bacterial uptake by human epithelial cells. Upon expression in engineered Y.enterocolitica confers an 11- to 15-fold increase in bacterial adherence and uptake by human epithelial cell lines; part of the uptake is mediated by integrin beta-1 (ITGB1) suggesting it may be a human receptor for NadA. A bacterial cell surface protein; antisera against this protein induce complement-mediated killing of this and other strains. The sequence is that of Neisseria adhesin A from Neisseria meningitidis serogroup B (strain ATCC BAA-335 / MC58).